The chain runs to 437 residues: Succinate--CoA ligase [ADP-forming] subunit beta, hydrogenosomal (437 aa).

Residues 1 to 27 (MLANVTRSTSKAAPALASIAQTAQKRF) constitute a hydrogenosome transit peptide. The ATP-grasp domain occupies 36–278 (MNLLHEYNVN…TTQEDPREVA (243 aa)). ATP is bound by residues Lys73, 80–82 (GRG), and Glu141. Asn233 and Asp247 together coordinate Mg(2+). Substrate contacts are provided by residues Asn299 and 356 to 358 (GIM).

Belongs to the succinate/malate CoA ligase beta subunit family. Heterodimer of an alpha and a beta subunit. Requires Mg(2+) as cofactor.

The protein resides in the hydrogenosome. It catalyses the reaction succinate + ATP + CoA = succinyl-CoA + ADP + phosphate. It participates in carbohydrate metabolism; tricarboxylic acid cycle; succinate from succinyl-CoA (ligase route): step 1/1. Its function is as follows. Succinyl-CoA synthetase functions in the citric acid cycle (TCA), coupling the hydrolysis of succinyl-CoA to the synthesis of ATP and thus represents the only step of substrate-level phosphorylation in the TCA. The beta subunit provides nucleotide specificity of the enzyme and binds the substrate succinate, while the binding sites for coenzyme A and phosphate are found in the alpha subunit. In Neocallimastix frontalis (Rumen fungus), this protein is Succinate--CoA ligase [ADP-forming] subunit beta, hydrogenosomal.